The chain runs to 232 residues: Thiamine import ATP-binding protein ThiQ (232 aa).

Positions Leu2–Ile230 constitute an ABC transporter domain. An ATP-binding site is contributed by Gly32–Ser39.

This sequence belongs to the ABC transporter superfamily. Thiamine importer (TC 3.A.1.19.1) family. In terms of assembly, the complex is composed of two ATP-binding proteins (ThiQ), two transmembrane proteins (ThiP) and a solute-binding protein (ThiB).

The protein localises to the cell inner membrane. It carries out the reaction thiamine(out) + ATP + H2O = thiamine(in) + ADP + phosphate + H(+). Part of the ABC transporter complex ThiBPQ involved in thiamine import. Responsible for energy coupling to the transport system. This chain is Thiamine import ATP-binding protein ThiQ, found in Shigella sonnei (strain Ss046).